We begin with the raw amino-acid sequence, 286 residues long: uncharacterized protein (286 aa).

It belongs to the methyltransferase superfamily.

In terms of biological role, involved in osmoadaptation. This is an uncharacterized protein from Emericella nidulans (strain FGSC A4 / ATCC 38163 / CBS 112.46 / NRRL 194 / M139) (Aspergillus nidulans).